The chain runs to 96 residues: RNA-binding protein Hfq (96 aa).

The 60-residue stretch at Asp9–Val68 folds into the Sm domain. The interval Pro64–Glu96 is disordered. Residues His70–Glu96 are compositionally biased toward polar residues.

Belongs to the Hfq family. Homohexamer.

Functionally, RNA chaperone that binds small regulatory RNA (sRNAs) and mRNAs to facilitate mRNA translational regulation in response to envelope stress, environmental stress and changes in metabolite concentrations. Also binds with high specificity to tRNAs. In Proteus mirabilis (strain HI4320), this protein is RNA-binding protein Hfq.